The following is a 646-amino-acid chain: Serine/threonine-protein kinase max-2 (646 aa).

The tract at residues F19 to D40 is disordered. Over residues S22–K33 the composition is skewed to basic and acidic residues. A CRIB domain is found at I41–G54. The tract at residues L136–R345 is disordered. Low complexity-rich tracts occupy residues S142–A157 and L167–S180. The span at S196–G205 shows a compositional bias: polar residues. A compositionally biased stretch (pro residues) spans S214–L223. The segment covering T229–G245 has biased composition (low complexity). The segment covering A246–P262 has biased composition (pro residues). Composition is skewed to low complexity over residues S273 to V307 and K323 to V334. The region spanning Y376 to L627 is the Protein kinase domain. ATP contacts are provided by residues I382–V390 and K405. The active-site Proton acceptor is D496.

Belongs to the protein kinase superfamily. STE Ser/Thr protein kinase family. STE20 subfamily. Interacts with mlk-1; the interaction is independent of max-2 and mlk-1 kinase activities. Interacts with mig-2 (GTP-bound form). It depends on Mg(2+) as a cofactor.

Its subcellular location is the perikaryon. The protein localises to the cell projection. It is found in the dendrite. The protein resides in the cytoplasm. It carries out the reaction L-seryl-[protein] + ATP = O-phospho-L-seryl-[protein] + ADP + H(+). The catalysed reaction is L-threonyl-[protein] + ATP = O-phospho-L-threonyl-[protein] + ADP + H(+). Functionally, serine/threonine-protein kinase, which phosphorylates mlk-1. Involved in the stress response to heavy metals by activating the mlk-1/mek-1/kgb-1 pathway. In ventral cord commissural motoneurons, required for dorsal axon guidance downstream of unc-6/netrin repulsion receptor unc-5 and probably of Rho GTPases ced-10 and mig-2. Plays a redundant role with mig-10 in orientating axonal growth of HSN neurons. Plays a redundant role with pak-1 in P neuroblast migration and in distal tip cell (DTC)-mediated guidance of gonad elongation probably downstream of Rho GTPases. In association with pak-2, plays a role in embryogenesis. In association with pak-1, may be involved in spermatogenesis. This chain is Serine/threonine-protein kinase max-2, found in Caenorhabditis elegans.